The chain runs to 412 residues: Early growth response protein 2b (412 aa).

The disordered stretch occupies residues 269-299 (YTPQNLPLRPILRPRKYPNRPSKTPVHERPY). C2H2-type zinc fingers lie at residues 299-323 (YPCP…IRIH), 329-351 (FQCR…IRTH), and 357-379 (FACD…TKIH). Positions 371–412 (ERKRHTKIHLRQKERKSSSSSTGVSSSERGVATSICSSSSNQ) are disordered. The segment covering 374-384 (RHTKIHLRQKE) has biased composition (basic residues). A compositionally biased stretch (low complexity) spans 388–401 (SSSSTGVSSSERGV).

The protein belongs to the EGR C2H2-type zinc-finger protein family.

The protein localises to the nucleus. In terms of biological role, sequence-specific DNA-binding transcription factor. Binds to two specific DNA sites located in the promoter region of HOXA4. This Danio rerio (Zebrafish) protein is Early growth response protein 2b (egr2b).